The following is a 971-amino-acid chain: DNA-directed RNA polymerase subunit Rpo1N (971 aa).

Met1 bears the Blocked amino end (Met) mark. Positions 62, 65, 72, 75, 102, 105, 149, and 152 each coordinate Zn(2+). The tract at residues 185–204 (SMQPDEDEDDAGVSPQELAE) is disordered. Residues Asp527, Asp529, and Asp531 each coordinate Mg(2+). The tract at residues 951 to 971 (VEEPPTNLSEHGAAWEVESDD) is disordered.

This sequence belongs to the RNA polymerase beta' chain family. Part of the RNA polymerase complex. The cofactor is Mg(2+). Zn(2+) serves as cofactor. The N-terminus is blocked.

The protein localises to the cytoplasm. The enzyme catalyses RNA(n) + a ribonucleoside 5'-triphosphate = RNA(n+1) + diphosphate. DNA-dependent RNA polymerase (RNAP) catalyzes the transcription of DNA into RNA using the four ribonucleoside triphosphates as substrates. Forms the clamp head domain. In Halobacterium salinarum (strain ATCC 29341 / DSM 671 / R1), this protein is DNA-directed RNA polymerase subunit Rpo1N.